Reading from the N-terminus, the 409-residue chain is Transcriptional regulator GME11370 (409 aa).

The zn(2)-C6 fungal-type DNA-binding region spans 17-44; that stretch reads CHACAASKLKCSKEKPSCARCLKRNKPC. Positions 49 to 83 are disordered; sequence TRRAGRHHGSRSKKVPTISPASAPEPQPFSTTPPD. Residues 51-62 show a composition bias toward basic residues; sequence RAGRHHGSRSKK.

Its subcellular location is the nucleus. In terms of biological role, transcriptional regulator; part of the gene cluster that mediates the biosynthesis of dibenzodioxocinones such as pestalotiollide B, a novel class of inhibitors against cholesterol ester transfer protein (CEPT). This Pestalotiopsis microspora protein is Transcriptional regulator GME11370.